The sequence spans 495 residues: F(420)H(2) dehydrogenase subunit M (495 aa).

15 consecutive transmembrane segments (helical) span residues 1–21 (MLPVASLLILVPLIFAVVTFF), 27–47 (LAAGFGFLGSLATLGLTLYAY), 57–77 (MQFYESVSWIPFLGVNYSVGI), 80–100 (VSMPLILLNAIVIPFMILFTW), 108–128 (NRFYGLILTMQAAVIGVFVAL), 130–150 (FVVFYIFWELTLVPLFFIVNL), 163–183 (FFIYTHVASLVMLLGIFGLFY), 215–235 (IFLAILFGFLAKLPAFPFHSW), 249–269 (ILFILLKIGGYGLFRISLPML), 277–297 (LMIMILGLLGSVSILYGALLA), 315–335 (MGYVILGSAGLVTLSVSGAMF), 338–358 (FSHGLIMSIMFMSAGAIQTAA), 378–398 (VAMMVGFMASLGLPGLTGFIA), 412–432 (VFVVIALLAIVVTAGYHLWAM), and 450–470 (INSIQVFSMAVIALLVLYFGL).

It belongs to the complex I subunit 4 family. In terms of assembly, the FPO complex is composed of at least 13 different subunits. FpoA, FpoH, FpoJ, FpoK, FpoL, FpoM and FpoN proteins constitute the membrane sector of the complex.

It localises to the cell membrane. The catalysed reaction is methanophenazine + reduced coenzyme F420-(gamma-L-Glu)(n) = dihydromethanophenazine + oxidized coenzyme F420-(gamma-L-Glu)(n) + H(+). Its function is as follows. Component of the F(420)H(2) dehydrogenase (FPO complex) which is part of the energy-conserving F(420)H(2):heterodisulfide oxidoreductase system. The membrane-bound electron transfer system of the complex plays an important role in the metabolism of methylotrophic methanogens when the organisms grow on methanol or methylamines. Catalyzes the oxidation of methanophenazine to dihydromethanophenazine. It shuttles electrons from F(420)H(2), via FAD and iron-sulfur (Fe-S) centers, to methanophenazine (an electron carrier in the membrane). It couples the redox reaction to proton translocation (for every two electrons transferred, two hydrogen ions are translocated across the cytoplasmic membrane), and thus conserves the redox energy in a proton gradient. It also catalyzes the oxidation of F(420)H(2) with quinones such as 2,3-dimethyl-1,4-naphthoquinone, 2-methyl-1,4-naphthoquinone and tetramethyl-p-benzoquinone. The sequence is that of F(420)H(2) dehydrogenase subunit M (fpoM) from Methanosarcina mazei (strain ATCC BAA-159 / DSM 3647 / Goe1 / Go1 / JCM 11833 / OCM 88) (Methanosarcina frisia).